Consider the following 175-residue polypeptide: Crossover junction endodeoxyribonuclease RuvC (175 aa).

Catalysis depends on residues Asp-8, Glu-69, and Asp-141. Positions 8, 69, and 141 each coordinate Mg(2+).

The protein belongs to the RuvC family. As to quaternary structure, homodimer which binds Holliday junction (HJ) DNA. The HJ becomes 2-fold symmetrical on binding to RuvC with unstacked arms; it has a different conformation from HJ DNA in complex with RuvA. In the full resolvosome a probable DNA-RuvA(4)-RuvB(12)-RuvC(2) complex forms which resolves the HJ. It depends on Mg(2+) as a cofactor.

It localises to the cytoplasm. It catalyses the reaction Endonucleolytic cleavage at a junction such as a reciprocal single-stranded crossover between two homologous DNA duplexes (Holliday junction).. Its function is as follows. The RuvA-RuvB-RuvC complex processes Holliday junction (HJ) DNA during genetic recombination and DNA repair. Endonuclease that resolves HJ intermediates. Cleaves cruciform DNA by making single-stranded nicks across the HJ at symmetrical positions within the homologous arms, yielding a 5'-phosphate and a 3'-hydroxyl group; requires a central core of homology in the junction. The consensus cleavage sequence is 5'-(A/T)TT(C/G)-3'. Cleavage occurs on the 3'-side of the TT dinucleotide at the point of strand exchange. HJ branch migration catalyzed by RuvA-RuvB allows RuvC to scan DNA until it finds its consensus sequence, where it cleaves and resolves the cruciform DNA. In Colwellia psychrerythraea (strain 34H / ATCC BAA-681) (Vibrio psychroerythus), this protein is Crossover junction endodeoxyribonuclease RuvC.